Reading from the N-terminus, the 98-residue chain is NADH-ubiquinone oxidoreductase chain 4L (98 aa).

3 helical membrane-spanning segments follow: residues 1 to 21, 28 to 48, and 59 to 79; these read MTSINLNLTVAFSLALAGVLI, STLLCLEGMMLSLFVMMALLI, and APIILLVFSACEAGVGLALLV.

It belongs to the complex I subunit 4L family. In terms of assembly, core subunit of respiratory chain NADH dehydrogenase (Complex I) which is composed of 45 different subunits.

The protein resides in the mitochondrion inner membrane. The enzyme catalyses a ubiquinone + NADH + 5 H(+)(in) = a ubiquinol + NAD(+) + 4 H(+)(out). Core subunit of the mitochondrial membrane respiratory chain NADH dehydrogenase (Complex I) which catalyzes electron transfer from NADH through the respiratory chain, using ubiquinone as an electron acceptor. Part of the enzyme membrane arm which is embedded in the lipid bilayer and involved in proton translocation. The sequence is that of NADH-ubiquinone oxidoreductase chain 4L (MT-ND4L) from Trichosurus vulpecula (Brush-tailed possum).